The sequence spans 92 residues: Conotoxin Im9.4 (92 aa).

A signal peptide spans 1–20; that stretch reads MHRSLAGSAVLMLLLLFALG. Residues 21–62 constitute a propeptide that is removed on maturation; the sequence is NFVGVQPGLVTRDADNGQLMDNRRNLRLERKTMSLFKSLDKR. Intrachain disulfides connect Cys-65–Cys-79, Cys-69–Cys-81, and Cys-75–Cys-87. Residue Asn-90 is modified to Asparagine amide.

The protein belongs to the conotoxin P superfamily. Expressed by the venom duct.

It localises to the secreted. Probable neurotoxin that inhibits ion channels. The chain is Conotoxin Im9.4 from Conus imperialis (Imperial cone).